Here is a 345-residue protein sequence, read N- to C-terminus: Phosphoribosylformylglycinamidine cyclo-ligase (345 aa).

It belongs to the AIR synthase family.

Its subcellular location is the cytoplasm. The catalysed reaction is 2-formamido-N(1)-(5-O-phospho-beta-D-ribosyl)acetamidine + ATP = 5-amino-1-(5-phospho-beta-D-ribosyl)imidazole + ADP + phosphate + H(+). The protein operates within purine metabolism; IMP biosynthesis via de novo pathway; 5-amino-1-(5-phospho-D-ribosyl)imidazole from N(2)-formyl-N(1)-(5-phospho-D-ribosyl)glycinamide: step 2/2. The polypeptide is Phosphoribosylformylglycinamidine cyclo-ligase (Lactobacillus acidophilus (strain ATCC 700396 / NCK56 / N2 / NCFM)).